The sequence spans 481 residues: Sulfate adenylyltransferase subunit 1 (481 aa).

Positions 22-236 constitute a tr-type G domain; sequence KDLLRFITCG…LLDSIRLDAD (215 aa). Residues 31-38 form a G1 region; the sequence is GSVDDGKS. 31–38 provides a ligand contact to GTP; that stretch reads GSVDDGKS. The G2 stretch occupies residues 89 to 93; sequence GITID. The interval 110 to 113 is G3; sequence DCPG. GTP contacts are provided by residues 110–114 and 165–168; these read DCPGH and NKMD. Residues 165 to 168 are G4; sequence NKMD. Residues 202-204 are G5; it reads SAL.

The protein belongs to the TRAFAC class translation factor GTPase superfamily. Classic translation factor GTPase family. CysN/NodQ subfamily. Heterodimer composed of CysD, the smaller subunit, and CysN.

The enzyme catalyses sulfate + ATP + H(+) = adenosine 5'-phosphosulfate + diphosphate. Its pathway is sulfur metabolism; hydrogen sulfide biosynthesis; sulfite from sulfate: step 1/3. With CysD forms the ATP sulfurylase (ATPS) that catalyzes the adenylation of sulfate producing adenosine 5'-phosphosulfate (APS) and diphosphate, the first enzymatic step in sulfur assimilation pathway. APS synthesis involves the formation of a high-energy phosphoric-sulfuric acid anhydride bond driven by GTP hydrolysis by CysN coupled to ATP hydrolysis by CysD. This chain is Sulfate adenylyltransferase subunit 1, found in Laribacter hongkongensis (strain HLHK9).